We begin with the raw amino-acid sequence, 166 residues long: Regulator of ribonuclease activity A (166 aa).

It belongs to the RraA family. Homotrimer. Binds to both RNA-binding sites in the C-terminal region of Rne and to RhlB.

The protein resides in the cytoplasm. Its function is as follows. Globally modulates RNA abundance by binding to RNase E (Rne) and regulating its endonucleolytic activity. Can modulate Rne action in a substrate-dependent manner by altering the composition of the degradosome. Modulates RNA-binding and helicase activities of the degradosome. The chain is Regulator of ribonuclease activity A from Pasteurella multocida (strain Pm70).